Reading from the N-terminus, the 444-residue chain is Enolase (444 aa).

Residues His-163 and Glu-172 each contribute to the substrate site. The active-site Proton donor is Glu-215. Asp-250, Glu-300, and Asp-327 together coordinate Mg(2+). Glu-300 and Asp-327 together coordinate substrate. The active-site Proton acceptor is Lys-352. Substrate-binding positions include 379-382 and Lys-403; that span reads SHRS.

This sequence belongs to the enolase family. As to quaternary structure, homodimer. The cofactor is Mg(2+).

Its subcellular location is the cytoplasm. The catalysed reaction is (2R)-2-phosphoglycerate = phosphoenolpyruvate + H2O. It functions in the pathway carbohydrate degradation; glycolysis; pyruvate from D-glyceraldehyde 3-phosphate: step 4/5. The chain is Enolase (PGH1) from Solanum lycopersicum (Tomato).